A 221-amino-acid chain; its full sequence is Charged multivesicular body protein 3 (221 aa).

Gly-2 carries the N-myristoyl glycine lipid modification. A coiled-coil region spans residues Lys-22–Lys-54. Important for autoinhibitory function regions lie at residues Val-59–Ala-64 and Ile-168–Leu-169. A coiled-coil region spans residues Leu-144–Ser-221. The disordered stretch occupies residues Pro-181–Ser-221. Residues Pro-199–Glu-211 are compositionally biased toward acidic residues. The MIT-interacting motif motif lies at Glu-200–Glu-210. 2 interaction with STAMBP regions span residues Glu-202–Glu-206 and Arg-220–Ser-221.

It belongs to the SNF7 family. Probable core component of the endosomal sorting required for transport complex III (ESCRT-III). ESCRT-III components are thought to multimerize to form a flat lattice on the perimeter membrane of the endosome. Several assembly forms of ESCRT-III may exist that interact and act sequentially.

It is found in the cytoplasm. Its subcellular location is the cytosol. It localises to the membrane. The protein localises to the endosome. The protein resides in the late endosome membrane. Functionally, probable core component of the endosomal sorting required for transport complex III (ESCRT-III) which is involved in multivesicular bodies (MVBs) formation and sorting of endosomal cargo proteins into MVBs. MVBs contain intraluminal vesicles (ILVs) that are generated by invagination and scission from the limiting membrane of the endosome and mostly are delivered to lysosomes enabling degradation of membrane proteins, such as stimulated growth factor receptors, lysosomal enzymes and lipids. Involved in late stages of cytokinesis. Plays a role in endosomal sorting/trafficking of EGF receptor. The chain is Charged multivesicular body protein 3 (chmp3) from Danio rerio (Zebrafish).